We begin with the raw amino-acid sequence, 385 residues long: Probable thioesterase PNKD (385 aa).

Polar residues predominate over residues 31–42 (NKASQNRSRALQ). The disordered stretch occupies residues 31–57 (NKASQNRSRALQSHSSPECKEEPEPLS). Residues H172, H174, D176, H177, H229, D253, and H291 each contribute to the Zn(2+) site.

The protein belongs to the metallo-beta-lactamase superfamily. Glyoxalase II family. Zn(2+) is required as a cofactor. Post-translationally, undergoes cleavage at the N-terminus.

Its subcellular location is the cell membrane. The protein localises to the mitochondrion. The enzyme catalyses a thioester + H2O = a thiol + a carboxylate + H(+). Functionally, probable thioesterase that may play a role in cellular detoxification processes; it likely acts on a yet-unknown alpha-hydroxythioester substrate. In vitro, it is able to catalyze the hydrolysis of S-D-lactoyl-glutathione to form glutathione and D-lactic acid at very low rate, though this reaction is not physiologically relevant in vivo. The sequence is that of Probable thioesterase PNKD (PNKD) from Bos taurus (Bovine).